The chain runs to 158 residues: S-ribosylhomocysteine lyase (158 aa).

Fe cation is bound by residues His-54, His-58, and Cys-124.

Belongs to the LuxS family. In terms of assembly, homodimer. Fe cation is required as a cofactor.

The enzyme catalyses S-(5-deoxy-D-ribos-5-yl)-L-homocysteine = (S)-4,5-dihydroxypentane-2,3-dione + L-homocysteine. Functionally, involved in the synthesis of autoinducer 2 (AI-2) which is secreted by bacteria and is used to communicate both the cell density and the metabolic potential of the environment. The regulation of gene expression in response to changes in cell density is called quorum sensing. Catalyzes the transformation of S-ribosylhomocysteine (RHC) to homocysteine (HC) and 4,5-dihydroxy-2,3-pentadione (DPD). The protein is S-ribosylhomocysteine lyase of Lactobacillus gasseri (strain ATCC 33323 / DSM 20243 / BCRC 14619 / CIP 102991 / JCM 1131 / KCTC 3163 / NCIMB 11718 / NCTC 13722 / AM63).